Reading from the N-terminus, the 393-residue chain is Nucleosome assembly protein 1-like 1 (393 aa).

A compositionally biased stretch (basic and acidic residues) spans methionine 1–threonine 10. 2 disordered regions span residues methionine 1–alanine 36 and glutamate 132–proline 165. Composition is skewed to acidic residues over residues glutamate 11–glutamate 30 and glutamate 132–serine 144. An NAP1L motif motif is present at residues tyrosine 126 to alanine 151. Residues glycine 145–proline 165 show a composition bias toward basic and acidic residues. The Nuclear localization signal signature appears at isoleucine 274–histidine 280. Acidic residues predominate over residues alanine 347–aspartate 378. The tract at residues alanine 347 to glutamine 393 is disordered. A compositionally biased stretch (basic and acidic residues) spans tyrosine 379–glutamine 393.

This sequence belongs to the nucleosome assembly protein (NAP) family. Forms homomultimers. Interacts with histone B4. Interacts with the B-type cyclins ccnb1 and ccnb2. In terms of processing, phosphorylated by cyclin B-cdc2 kinase complexes.

The protein localises to the cytoplasm. It is found in the nucleus. Its function is as follows. Acts as a chaperone for the linker histone to facilitate deposition of histone B4 onto linker DNA. Required for both remodeling of sperm chromatin into nucleosomes, and linker histone binding to nucleosome core dimers. Plays a role in tissue-specific gene regulation. Required for primitive hemopoiesis, acting upstream of tal1/scl. The protein is Nucleosome assembly protein 1-like 1 of Xenopus tropicalis (Western clawed frog).